Here is a 545-residue protein sequence, read N- to C-terminus: ATP synthase subunit alpha, mitochondrial (545 aa).

The N-terminal 35 residues, 1 to 35, are a transit peptide targeting the mitochondrion; sequence MLARTAAIRSLSRTLINSTKAARPAAAALASTRRL. Phosphoserine is present on residues S57 and S178. 206–213 contacts ATP; it reads GDRQTGKT.

Belongs to the ATPase alpha/beta chains family. F-type ATPases have 2 components, CF(1) - the catalytic core - and CF(0) - the membrane proton channel. CF(1) has five subunits: alpha(3), beta(3), gamma(1), delta(1), epsilon(1). CF(0) has three main subunits: a, b and c.

The protein localises to the mitochondrion inner membrane. Functionally, mitochondrial membrane ATP synthase (F(1)F(0) ATP synthase or Complex V) produces ATP from ADP in the presence of a proton gradient across the membrane which is generated by electron transport complexes of the respiratory chain. F-type ATPases consist of two structural domains, F(1) - containing the extramembraneous catalytic core, and F(0) - containing the membrane proton channel, linked together by a central stalk and a peripheral stalk. During catalysis, ATP synthesis in the catalytic domain of F(1) is coupled via a rotary mechanism of the central stalk subunits to proton translocation. Subunits alpha and beta form the catalytic core in F(1). Rotation of the central stalk against the surrounding alpha(3)beta(3) subunits leads to hydrolysis of ATP in three separate catalytic sites on the beta subunits. Subunit alpha does not bear the catalytic high-affinity ATP-binding sites. In Saccharomyces cerevisiae (strain ATCC 204508 / S288c) (Baker's yeast), this protein is ATP synthase subunit alpha, mitochondrial (ATP1).